The following is a 508-amino-acid chain: Potassium/proton antiporter CemA (508 aa).

A run of 5 helical transmembrane segments spans residues 66-86 (LFIIYWSLLEYRISLCFLNLL), 282-302 (YQALASIQYIGCLIFLPWIIS), 386-406 (ILHLLTGMICFTTLGALFILG), 433-453 (ILLLTDLCIGFHSPHGWEVVI), and 468-488 (IISCFVSTFPVILDTVSKYWI).

The protein belongs to the CemA family.

The protein localises to the plastid. Its subcellular location is the chloroplast inner membrane. It catalyses the reaction K(+)(in) + H(+)(out) = K(+)(out) + H(+)(in). Contributes to K(+)/H(+) antiport activity by supporting proton efflux to control proton extrusion and homeostasis in chloroplasts in a light-dependent manner to modulate photosynthesis. Prevents excessive induction of non-photochemical quenching (NPQ) under continuous-light conditions. Indirectly promotes efficient inorganic carbon uptake into chloroplasts. In Anthoceros angustus (Hornwort), this protein is Potassium/proton antiporter CemA.